A 468-amino-acid polypeptide reads, in one-letter code: Tissue alpha-L-fucosidase (468 aa).

The N-terminal stretch at 1-22 is a signal peptide; that stretch reads MRSWVVGARLLLLLQLVLVLGA. The residue at position 173 (Thr173) is a Phosphothreonine. N-linked (GlcNAc...) asparagine glycans are attached at residues Asn244, Asn271, and Asn320.

The protein belongs to the glycosyl hydrolase 29 family. Homotetramer.

The protein resides in the lysosome. The enzyme catalyses an alpha-L-fucoside + H2O = L-fucose + an alcohol. It carries out the reaction a neolactoside IV(2)-alpha-Fuc-nLc4Cer(d18:1(4E)) + H2O = a neolactoside nLc4Cer(d18:1(4E)) + L-fucose. The catalysed reaction is a neolactoside IV(2)-alpha-Fuc-nLc4Cer(d18:0) + H2O = a neolactoside nLc4Cer(d18:0) + L-fucose. Alpha-L-fucosidase is responsible for hydrolyzing the alpha-1,6-linked fucose joined to the reducing-end N-acetylglucosamine of the carbohydrate moieties of glycoproteins. The protein is Tissue alpha-L-fucosidase (FUCA1) of Bos taurus (Bovine).